The sequence spans 254 residues: Adenosine 5'-phosphosulfate reductase (254 aa).

Cysteine 131, cysteine 132, cysteine 212, and cysteine 215 together coordinate [4Fe-4S] cluster. The active-site Nucleophile; cysteine thiosulfonate intermediate is the cysteine 238.

The protein belongs to the PAPS reductase family. CysH subfamily. [4Fe-4S] cluster serves as cofactor.

It is found in the cytoplasm. The enzyme catalyses [thioredoxin]-disulfide + sulfite + AMP + 2 H(+) = adenosine 5'-phosphosulfate + [thioredoxin]-dithiol. The protein operates within sulfur metabolism; hydrogen sulfide biosynthesis; sulfite from sulfate. In terms of biological role, catalyzes the formation of sulfite from adenosine 5'-phosphosulfate (APS) using thioredoxin as an electron donor. The protein is Adenosine 5'-phosphosulfate reductase of Mesorhizobium japonicum (strain LMG 29417 / CECT 9101 / MAFF 303099) (Mesorhizobium loti (strain MAFF 303099)).